The following is a 523-amino-acid chain: GMP synthase [glutamine-hydrolyzing] (523 aa).

The Glutamine amidotransferase type-1 domain occupies 8–205 (KILILDFGSQ…VVNICGCATN (198 aa)). C85 functions as the Nucleophile in the catalytic mechanism. Active-site residues include H179 and E181. The GMPS ATP-PPase domain occupies 206-398 (WTPENIIEDA…LGLPAEMLNR (193 aa)). Residue 233–239 (SGGVDSS) participates in ATP binding.

In terms of assembly, homodimer.

It catalyses the reaction XMP + L-glutamine + ATP + H2O = GMP + L-glutamate + AMP + diphosphate + 2 H(+). The protein operates within purine metabolism; GMP biosynthesis; GMP from XMP (L-Gln route): step 1/1. In terms of biological role, catalyzes the synthesis of GMP from XMP. This chain is GMP synthase [glutamine-hydrolyzing], found in Actinobacillus succinogenes (strain ATCC 55618 / DSM 22257 / CCUG 43843 / 130Z).